The chain runs to 244 residues: Ubiquinone/menaquinone biosynthesis C-methyltransferase UbiE (244 aa).

S-adenosyl-L-methionine-binding positions include threonine 70, aspartate 91, and 117 to 118 (DA).

It belongs to the class I-like SAM-binding methyltransferase superfamily. MenG/UbiE family.

The enzyme catalyses a 2-demethylmenaquinol + S-adenosyl-L-methionine = a menaquinol + S-adenosyl-L-homocysteine + H(+). It carries out the reaction a 2-methoxy-6-(all-trans-polyprenyl)benzene-1,4-diol + S-adenosyl-L-methionine = a 5-methoxy-2-methyl-3-(all-trans-polyprenyl)benzene-1,4-diol + S-adenosyl-L-homocysteine + H(+). The protein operates within quinol/quinone metabolism; menaquinone biosynthesis; menaquinol from 1,4-dihydroxy-2-naphthoate: step 2/2. It functions in the pathway cofactor biosynthesis; ubiquinone biosynthesis. Methyltransferase required for the conversion of demethylmenaquinol (DMKH2) to menaquinol (MKH2) and the conversion of 2-polyprenyl-6-methoxy-1,4-benzoquinol (DDMQH2) to 2-polyprenyl-3-methyl-6-methoxy-1,4-benzoquinol (DMQH2). The chain is Ubiquinone/menaquinone biosynthesis C-methyltransferase UbiE from Chromobacterium violaceum (strain ATCC 12472 / DSM 30191 / JCM 1249 / CCUG 213 / NBRC 12614 / NCIMB 9131 / NCTC 9757 / MK).